We begin with the raw amino-acid sequence, 294 residues long: Sarcotoxin-2A (294 aa).

Positions 1 to 22 (MKSFVFFAACMAIIALSSLVQA) are cleaved as a signal peptide. Residues 23 to 24 (YP) constitute a propeptide, removed by a dipeptidylpeptidase. Gln25 carries the post-translational modification Pyrrolidone carboxylic acid. Arginine amide is present on Arg293.

This sequence belongs to the attacin/sarcotoxin-2 family. In terms of tissue distribution, synthesized by the fat body and is eventually secreted into the hemolymph.

The protein resides in the secreted. In terms of biological role, sarcotoxin II is an antibacterial protein which plays a role in the inflammatory response of this insect. The main effect of sarcotoxin II on E.coli may be the inhibition of cell wall synthesis, including septum formation. The chain is Sarcotoxin-2A from Sarcophaga peregrina (Flesh fly).